Here is a 138-residue protein sequence, read N- to C-terminus: Venom allergen 2 (138 aa).

Positions 1–19 are cleaved as a signal peptide; it reads MKSFVLATCLLGFAQIIYA. 3 disulfide bridges follow: Cys34–Cys57, Cys81–Cys94, and Cys101–Cys122.

It belongs to the ant venom allergen 2/4 family. In terms of assembly, homodimer; disulfide-linked. In terms of tissue distribution, expressed by the venom gland.

It is found in the secreted. This Solenopsis invicta (Red imported fire ant) protein is Venom allergen 2.